The primary structure comprises 497 residues: Glycerol kinase (497 aa).

Residue T12 participates in ADP binding. 3 residues coordinate ATP: T12, T13, and S14. A sn-glycerol 3-phosphate-binding site is contributed by T12. Position 16 (R16) interacts with ADP. Positions 82, 83, 134, and 243 each coordinate sn-glycerol 3-phosphate. Positions 82, 83, 134, 243, and 244 each coordinate glycerol. 2 residues coordinate ADP: T265 and G308. The ATP site is built by T265, G308, Q312, and G409. 2 residues coordinate ADP: G409 and N413.

It belongs to the FGGY kinase family.

It catalyses the reaction glycerol + ATP = sn-glycerol 3-phosphate + ADP + H(+). Its pathway is polyol metabolism; glycerol degradation via glycerol kinase pathway; sn-glycerol 3-phosphate from glycerol: step 1/1. With respect to regulation, inhibited by fructose 1,6-bisphosphate (FBP). Its function is as follows. Key enzyme in the regulation of glycerol uptake and metabolism. Catalyzes the phosphorylation of glycerol to yield sn-glycerol 3-phosphate. The protein is Glycerol kinase of Oleidesulfovibrio alaskensis (strain ATCC BAA-1058 / DSM 17464 / G20) (Desulfovibrio alaskensis).